A 722-amino-acid chain; its full sequence is Pesticidal crystal protein Cry22Aa (722 aa).

Functionally, promotes colloidosmotic lysis by binding to the midgut epithelial cells of hymenopteran species. This is Pesticidal crystal protein Cry22Aa (cry22Aa) from Bacillus thuringiensis.